The following is a 633-amino-acid chain: MAKIIQLSDDLSNKIAAGEVVERPASVVKELMENAIDASSTVVEIDVEEAGLSSIRMIDNGVGIDAEDCKLAFQRHATSKIKDENDLFRVRTLGFRGEALPSIASVSHLEMKTSTGEGAGTHLVLQGGKIISEKKTSGRRGTEIVVTNLFYNTPARLKYMKTVHTELGNISDVVNRIALAHPEVSIRLRHQGKVLLQTNGNGDVRHVLAAIYGTAVAKKMVPLHVQSLDFEVKGYISLPEVTRASRNYMSSVVNGRYVKHFPLVKAVHEGYHTLLPIGRHPITFIEMKMDPILVDVNVHPSKLEVRLSKEQELHELIKQGIKDVFQKQQLIPSASVPKKAPMPAIKNEQQSLTFDAKKGNTNEMETPLSYEPEPLESVVYETNQMSTYGMPVQEMTGASSPVFREDAPSERVHKEESAASLEYEESVLREDDAEAISENERVPVMYPIGQMHGTYILAQNERGLYIIDQHAAQERIKYEYYREKVGEIEQEVQEMLVPLTFHYSKNDMLIIEEHKEILTKVGVFLEPFGSGSYIVRSHPQWFPKGEEAELIEEIIEQVLVEKRVDIKKLREEAAIMMSCKGSIKANRHLRNDEIKALLDELRQTKDPFTCPHGRPIIIHHSTYEMEKMFKRVM.

This sequence belongs to the DNA mismatch repair MutL/HexB family.

This protein is involved in the repair of mismatches in DNA. It is required for dam-dependent methyl-directed DNA mismatch repair. May act as a 'molecular matchmaker', a protein that promotes the formation of a stable complex between two or more DNA-binding proteins in an ATP-dependent manner without itself being part of a final effector complex. The chain is DNA mismatch repair protein MutL from Bacillus pumilus (strain SAFR-032).